Consider the following 203-residue polypeptide: Histone deacetylase HDT4 (203 aa).

Positions 2–5 (EFWG) are required to repress transcription. The interval 121 to 203 (AALPQNEINP…PFPCGPSCKK (83 aa)) is disordered. Residues 129-157 (NPEEDDESDSDEMGLDEDDDSSDEEDVEA) show a composition bias toward acidic residues. Residues 180 to 193 (GGKKNKSSGGKKRC) are compositionally biased toward basic residues.

The protein belongs to the histone deacetylase HD2 family. In terms of tissue distribution, confined to stems and flowers with young siliques.

The protein resides in the nucleus. It is found in the nucleolus. Its function is as follows. Probably mediates the deacetylation of lysine residues lysine residues on the N-terminal part of the core histones (H2A, H2B, H3 and H4). Histone deacetylation gives a tag for epigenetic repression and plays an important role in transcriptional regulation, cell cycle progression and developmental events. The chain is Histone deacetylase HDT4 (HDT4) from Arabidopsis thaliana (Mouse-ear cress).